The chain runs to 140 residues: N14 matrix protein (140 aa).

Residues 1 to 25 form the signal peptide; that stretch reads MACTLRLTIAALVLLGICHLSRPVA.

It belongs to the N16 matrix protein family. Heterooligomer; disulfide-linked. Pif97, Pif80, N16 and other proteins form a complex. Component of conchiolin, the organic matrix of nacre. Only expressed in the dorsal region of the mantle.

Its subcellular location is the secreted. It is found in the extracellular space. It localises to the extracellular matrix. Its function is as follows. May be specifically involved in the formation of the nacreous layer. This is N14 matrix protein from Pinctada maxima (Silver-lipped pearl oyster).